We begin with the raw amino-acid sequence, 379 residues long: L-lactate dehydrogenase (379 aa).

The FMN hydroxy acid dehydrogenase domain maps to 1-379 (MIISASTDYR…LSRDSLVKIP (379 aa)). Tyr24 is a substrate binding site. FMN is bound by residues Ser106 and Gln127. A substrate-binding site is contributed by Tyr129. Thr155 is a binding site for FMN. Residue Arg164 participates in substrate binding. Lys251 is a binding site for FMN. His275 acts as the Proton acceptor in catalysis. Arg278 contacts substrate. 306–330 (DSGIRTGLDVVRMLALGADCTLLGR) contacts FMN.

It belongs to the FMN-dependent alpha-hydroxy acid dehydrogenase family. FMN serves as cofactor.

The protein localises to the cell inner membrane. The catalysed reaction is (S)-lactate + A = pyruvate + AH2. Functionally, catalyzes the conversion of L-lactate to pyruvate. Is coupled to the respiratory chain. In Vibrio parahaemolyticus serotype O3:K6 (strain RIMD 2210633), this protein is L-lactate dehydrogenase.